Consider the following 211-residue polypeptide: Bifunctional transcriptional activator/DNA repair enzyme AdaA (211 aa).

C54 functions as the Nucleophile; methyl group acceptor from methylphosphotriester in the catalytic mechanism. Positions 54, 58, 85, and 88 each coordinate Zn(2+). The region spanning 102–200 (DLITEYIDKN…GQTPARFRQM (99 aa)) is the HTH araC/xylS-type domain. The segment at residues 119–140 (ESLADICHGSPYHMHRTFKKIK) is a DNA-binding region (H-T-H motif).

Zn(2+) is required as a cofactor.

The enzyme catalyses (2'-deoxyribonucleoside 5'-methylphosphotriester)-DNA + L-cysteinyl-[protein] = 2'-deoxyribonucleotide-DNA + S-methyl-L-cysteinyl-[protein] + H(+). Its function is as follows. Is involved in the adaptive response to alkylation damage in DNA caused by alkylating agents. Repairs the methylphosphotriester lesions in DNA by a direct and irreversible transfer of the methyl group to one of its own cysteine residues. The methylation of AdaA by methylphosphotriesters in DNA leads to its activation as a transcriptional regulator that activates the transcription of the ada operon which consists of adaA and adaB, and of the adjacent gene alkA. The chain is Bifunctional transcriptional activator/DNA repair enzyme AdaA (adaA) from Bacillus subtilis (strain 168).